The chain runs to 415 residues: All trans-polyprenyl-diphosphate synthase PDSS1 (415 aa).

Residues 16–35 (PAARSPGPGSPGRAGPLGPS) are disordered. Residues K134, R137, and H173 each coordinate isopentenyl diphosphate. Residues D180 and D184 each contribute to the Mg(2+) site. Residue R190 coordinates isopentenyl diphosphate.

This sequence belongs to the FPP/GGPP synthase family. As to quaternary structure, heterotetramer composed of 2 PDSS1/DPS1 and 2 PDSS2/DLP1 subunits. The cofactor is Mg(2+).

The protein localises to the mitochondrion. The enzyme catalyses 7 isopentenyl diphosphate + (2E,6E)-farnesyl diphosphate = all-trans-decaprenyl diphosphate + 7 diphosphate. The catalysed reaction is 6 isopentenyl diphosphate + (2E,6E)-farnesyl diphosphate = all-trans-nonaprenyl diphosphate + 6 diphosphate. The protein operates within cofactor biosynthesis; ubiquinone biosynthesis. In terms of biological role, heterotetrameric enzyme that catalyzes the condensation of farnesyl diphosphate (FPP), which acts as a primer, and isopentenyl diphosphate (IPP) to produce prenyl diphosphates of varying chain lengths and participates in the determination of the side chain of ubiquinone. Supplies nona and decaprenyl diphosphate, the precursors for the side chain of the isoprenoid quinones ubiquinone-9 (Q9)and ubiquinone-10 (Q10) respectively. The enzyme adds isopentenyl diphosphate molecules sequentially to farnesyl diphosphate with trans stereochemistry. This chain is All trans-polyprenyl-diphosphate synthase PDSS1, found in Homo sapiens (Human).